The chain runs to 249 residues: NH(3)-dependent NAD(+) synthetase (249 aa).

Aspartate 34 serves as a coordination point for Mg(2+). Arginine 110 lines the deamido-NAD(+) pocket. Threonine 130 contributes to the ATP binding site. Glutamate 135 is a Mg(2+) binding site. Deamido-NAD(+)-binding residues include lysine 143 and aspartate 150. Residues lysine 159 and serine 181 each coordinate ATP. 232-233 (HK) contributes to the deamido-NAD(+) binding site.

Belongs to the NAD synthetase family. In terms of assembly, homodimer.

The catalysed reaction is deamido-NAD(+) + NH4(+) + ATP = AMP + diphosphate + NAD(+) + H(+). The protein operates within cofactor biosynthesis; NAD(+) biosynthesis; NAD(+) from deamido-NAD(+) (ammonia route): step 1/1. In terms of biological role, catalyzes the ATP-dependent amidation of deamido-NAD to form NAD. Uses ammonia as a nitrogen source. The polypeptide is NH(3)-dependent NAD(+) synthetase (Picrophilus torridus (strain ATCC 700027 / DSM 9790 / JCM 10055 / NBRC 100828 / KAW 2/3)).